The chain runs to 792 residues: Ubiquitin carboxyl-terminal hydrolase 10 (792 aa).

Residues 2 to 27 (TTQESIKPLVDRILSNPLQFNAAMIS) are DHR2-binding module. 2 disordered regions span residues 64–87 (AESK…NTVP) and 103–320 (KDAA…SITP). Low complexity predominate over residues 107–129 (DATGAKKSAELSTELSTEPPSSS). Residues 109–145 (TGAKKSAELSTELSTEPPSSSSEDDKVGKEEEEEGEI) are SIR4-binding module. Residues 144 to 171 (EIFHEARDYVEPRKASLKERDNADKGDG) are compositionally biased toward basic and acidic residues. The segment at 167 to 208 (DKGDGEDIGEDIGEDIGEDIGEDIGEDIGENLGSPLATIDDS) is UTP22-binding module. Positions 172–195 (EDIGEDIGEDIGEDIGEDIGEDIG) are enriched in acidic residues. Residues 211-220 (ENEKEKRKEL) are compositionally biased toward basic and acidic residues. Acidic residues predominate over residues 226–241 (SDDEIEDDEDEDDMDY). The segment covering 288-297 (VNNTKENGNR) has biased composition (polar residues). In terms of domain architecture, USP spans 362-733 (RGLLNHGVTC…NAYYLLYTRL (372 aa)). The Nucleophile role is filled by cysteine 371. The segment at 526–563 (LDPNSDLSSDSINGTSATTSTTTSNAATKPSLSSSSSV) is disordered. Polar residues predominate over residues 530-539 (SDLSSDSING). Over residues 540 to 563 (TSATTSTTTSNAATKPSLSSSSSV) the composition is skewed to low complexity. Residue histidine 691 is the Proton acceptor of the active site. Residues 749 to 766 (TGNVTSKSKQEQAVNEPN) are compositionally biased toward polar residues. The disordered stretch occupies residues 749–792 (TGNVTSKSKQEQAVNEPNNRPLKINSKKNNRKKWKKNKKRKFTK). The segment covering 773–792 (NSKKNNRKKWKKNKKRKFTK) has biased composition (basic residues).

This sequence belongs to the peptidase C19 family. As to quaternary structure, interacts with SIR4. Interacts with the proliferating-cell nuclear antigen PCNA/POL30. Interacts with DHR2 and UTP22.

The protein localises to the nucleus. The protein resides in the chromosome. It is found in the telomere. It localises to the nucleolus. It catalyses the reaction Thiol-dependent hydrolysis of ester, thioester, amide, peptide and isopeptide bonds formed by the C-terminal Gly of ubiquitin (a 76-residue protein attached to proteins as an intracellular targeting signal).. Deubiquitinating enzyme involved in telomere and HM loci silencing, which is the repression of chromatin structure which leads to a stop in the transcription of nearby genes. Targets histone H2B for deubiquitination, thus helping to localize SIR2 to the telomere. At silent chromatin, including telomeres and the rDNA locus, not only maintains low H2B 'Lys-123' ubiquitination (H2BK123Ub), but also low H3 'Lys-4' and 'Lys-79' methylation (H3K4me and H3K79me, respectively). Controls the proliferating-cell nuclear antigen PCNA/POL30 deubiquitination which is crucial for keeping TLS polymerases in check as well as for down-regulating the error-free bypass. Deubiquitinates and stabilizes RPA190, the largest subunit of RNA polymerase I, to achieve optimal levels of ribosomes and cell growth. Also protects nutrient transporters such as GAP1 from ubiquitin-dependent endocytosis. The polypeptide is Ubiquitin carboxyl-terminal hydrolase 10 (UBP10) (Saccharomyces cerevisiae (strain ATCC 204508 / S288c) (Baker's yeast)).